We begin with the raw amino-acid sequence, 829 residues long: Periplasmic nitrate reductase (829 aa).

Residues 1–27 constitute a signal peptide (tat-type signal); the sequence is MNRRDFMKANAVIAAASAAGLALPAGA. The 4Fe-4S Mo/W bis-MGD-type domain maps to 39-95; the sequence is LEWNKAPCRFCGTGCSVMVATREGKVVATHGDANSEVNRGLSCIKGYFLSKIMYGRD. Residues C46, C49, C53, and C81 each coordinate [4Fe-4S] cluster. Mo-bis(molybdopterin guanine dinucleotide) contacts are provided by residues K83, Q150, N175, C179, 212-219, 243-247, 262-264, M373, Q377, N483, 509-510, K532, D559, and 719-728; these read WGSNMAEM, STFEH, QTD, SD, and TGRVLEHWHS. Residue W795 participates in substrate binding. Mo-bis(molybdopterin guanine dinucleotide) is bound by residues N803 and K820.

Belongs to the prokaryotic molybdopterin-containing oxidoreductase family. NasA/NapA/NarB subfamily. As to quaternary structure, component of the periplasmic nitrate reductase NapAB complex composed of NapA and NapB. [4Fe-4S] cluster serves as cofactor. Requires Mo-bis(molybdopterin guanine dinucleotide) as cofactor. In terms of processing, predicted to be exported by the Tat system. The position of the signal peptide cleavage has not been experimentally proven.

The protein resides in the periplasm. It carries out the reaction 2 Fe(II)-[cytochrome] + nitrate + 2 H(+) = 2 Fe(III)-[cytochrome] + nitrite + H2O. In terms of biological role, catalytic subunit of the periplasmic nitrate reductase complex NapAB. Receives electrons from NapB and catalyzes the reduction of nitrate to nitrite. This Shewanella denitrificans (strain OS217 / ATCC BAA-1090 / DSM 15013) protein is Periplasmic nitrate reductase.